The sequence spans 647 residues: DNA mismatch repair protein MutL (647 aa).

It belongs to the DNA mismatch repair MutL/HexB family.

Functionally, this protein is involved in the repair of mismatches in DNA. It is required for dam-dependent methyl-directed DNA mismatch repair. May act as a 'molecular matchmaker', a protein that promotes the formation of a stable complex between two or more DNA-binding proteins in an ATP-dependent manner without itself being part of a final effector complex. The chain is DNA mismatch repair protein MutL from Bacillus thuringiensis subsp. konkukian (strain 97-27).